Reading from the N-terminus, the 413-residue chain is Probable alpha-tubulin polyglutamylase Ttll1 (413 aa).

In terms of domain architecture, TTL spans 2-370; the sequence is ASKKLKYKTD…DDWNDDSSKT (369 aa). ATP contacts are provided by residues 184–187, Lys-197, and Asp-199; that span reads SRYI.

It belongs to the tubulin polyglutamylase family.

Its subcellular location is the cytoplasm. The protein resides in the cytoskeleton. The protein localises to the cilium basal body. It localises to the contractile vacuole. Probable tubulin polyglutamylase with a strong preference for alpha-tubulin. Modifies alpha-tubulin, generating side chains of glutamate on the gamma-carboxyl groups of specific glutamate residues within the C-terminal tail of alpha-tubulin. In Tetrahymena thermophila (strain SB210), this protein is Probable alpha-tubulin polyglutamylase Ttll1 (Ttll1).